A 91-amino-acid polypeptide reads, in one-letter code: Preprofallaxidin-2 (91 aa).

The N-terminal stretch at methionine 1 to cysteine 22 is a signal peptide. Residues glutamate 23–arginine 49 constitute a propeptide that is removed on maturation. The tract at residues lysine 24–arginine 49 is disordered. Positions glycine 31–histidine 41 are enriched in acidic residues. A Leucine amide modification is found at leucine 65. The propeptide occupies serine 69–arginine 73. Residue leucine 89 is modified to Leucine amide.

The protein belongs to the frog skin active peptide (FSAP) family. Dermaseptin subfamily. As to expression, expressed by the skin glands.

Its subcellular location is the secreted. Functionally, fallaxidin-3.1 shows antibacterial activity against the Gram-positive bacteria E.faecalis (MIC=100 uM) and L.lactis (MIC=100 uM). No antibacterial activity against the Gram-positive bacteria B.cereus, L.innocua, M.luteus, S.epidermidis, S.uberis and S.aureus, or the Gram-negative bacteria E.cloacae and E.coli. Its function is as follows. Fallaxidin-3.2 shows antibacterial activity against the Gram-positive bacteria E.faecalis (MIC=100 uM) and L.lactis (MIC=500 uM). No antibacterial activity against the Gram-positive bacteria B.cereus, L.innocua, M.luteus, S.epidermidis, S.uberis and S.aureus, or the Gram-negative bacteria E.cloacae and E.coli. This Litoria fallax (Eastern dwarf tree frog) protein is Preprofallaxidin-2.